The primary structure comprises 900 residues: E3 ubiquitin-protein ligase BRE1-like 2 (900 aa).

The disordered stretch occupies residues 1–31 (MENQESDEPMQKKPHLLDSVSPNSMARNSSP). Residues 20–31 (VSPNSMARNSSP) show a composition bias toward polar residues. Coiled coils occupy residues 63–96 (TVLQ…LQLN), 217–300 (EDAT…KDAA), 437–660 (SRIE…AEME), and 706–737 (SEKQ…EQMK). An RING-type zinc finger spans residues 848 to 887 (CGVCFDRPKEVVIVKCYHLFCQQCIQRSLEIRHRKCPGCG).

Belongs to the BRE1 family. As to quaternary structure, may act as a tetramer consisting of two copies of HUB1 and two copies of HUB2. As to expression, ubiquitously expressed.

The protein resides in the nucleus. It catalyses the reaction S-ubiquitinyl-[E2 ubiquitin-conjugating enzyme]-L-cysteine + [acceptor protein]-L-lysine = [E2 ubiquitin-conjugating enzyme]-L-cysteine + N(6)-ubiquitinyl-[acceptor protein]-L-lysine.. It functions in the pathway protein modification; protein ubiquitination. Functionally, E3 ubiquitin-protein ligase that monoubiquitinates H2B to form H2BK143ub1. H2BK143ub1 gives a specific tag for epigenetic transcriptional activation and is also prerequisite for H3K4me and maybe H3K79me. It thereby plays a central role in histone code and gene regulation. Forms a ubiquitin ligase complex in cooperation with the E2 enzyme UBC2/RAD6. This Arabidopsis thaliana (Mouse-ear cress) protein is E3 ubiquitin-protein ligase BRE1-like 2 (HUB2).